The chain runs to 147 residues: Hemoglobin subunit beta-3 (147 aa).

Residues histidine 3–histidine 147 form the Globin domain. Residues histidine 64 and histidine 93 each contribute to the heme b site.

Belongs to the globin family. Heterotetramer of two alpha chains and two beta chains. Red blood cells.

In terms of biological role, this is a tadpole (larval) beta chain. This Aquarana catesbeiana (American bullfrog) protein is Hemoglobin subunit beta-3.